The chain runs to 301 residues: Protoheme IX farnesyltransferase (301 aa).

Helical transmembrane passes span 20–42, 55–75, 105–125, 126–146, 150–172, 176–198, 227–247, 249–269, and 280–300; these read FTEL…GMWL, VDVI…SGAF, ALMV…MTTW, QAGV…SLYA, LVSN…WFAV, FSMV…FYAI, MFFW…LGIV, VILA…GFKM, and FIYS…ISIF.

It belongs to the UbiA prenyltransferase family. Protoheme IX farnesyltransferase subfamily. In terms of assembly, interacts with CtaA.

Its subcellular location is the cell membrane. It catalyses the reaction heme b + (2E,6E)-farnesyl diphosphate + H2O = Fe(II)-heme o + diphosphate. Its pathway is porphyrin-containing compound metabolism; heme O biosynthesis; heme O from protoheme: step 1/1. In terms of biological role, converts heme B (protoheme IX) to heme O by substitution of the vinyl group on carbon 2 of heme B porphyrin ring with a hydroxyethyl farnesyl side group. The polypeptide is Protoheme IX farnesyltransferase (Listeria welshimeri serovar 6b (strain ATCC 35897 / DSM 20650 / CCUG 15529 / CIP 8149 / NCTC 11857 / SLCC 5334 / V8)).